Reading from the N-terminus, the 186-residue chain is MSVADVKKGVEQKMQRSIEAFKNDLAKIRTGRAHTGLLDHVQVDYYGSMVPISQVANLTLVDARTIGVQPWEKNMVAKVEKAIREADLGLNPATTGDLIRVPMPALTEERRRELTKVVKSEGETAKVAIRNLRRDANEALKKLVKDKEISEDDERRASDDVQKLTDKHVAEIDKLVQTKEAEIMTV.

It belongs to the RRF family.

It localises to the cytoplasm. Its function is as follows. Responsible for the release of ribosomes from messenger RNA at the termination of protein biosynthesis. May increase the efficiency of translation by recycling ribosomes from one round of translation to another. The polypeptide is Ribosome-recycling factor (Burkholderia cenocepacia (strain HI2424)).